The sequence spans 59 residues: Cuticle protein 16 isoform D (59 aa).

In Limulus polyphemus (Atlantic horseshoe crab), this protein is Cuticle protein 16 isoform D.